The following is a 135-amino-acid chain: Large ribosomal subunit protein uL16c (135 aa).

The protein belongs to the universal ribosomal protein uL16 family. In terms of assembly, part of the 50S ribosomal subunit.

The protein resides in the plastid. It is found in the chloroplast. This Lepidium virginicum (Virginia pepperweed) protein is Large ribosomal subunit protein uL16c.